Reading from the N-terminus, the 201-residue chain is Small ribosomal subunit protein uS4c (201 aa).

The disordered stretch occupies residues 15-44 (LGALPGLTSKRPKTGNDLKNQSRSGKKSQY). The region spanning 89–150 (MRLDNILFRL…EKKSRTLIQN (62 aa)) is the S4 RNA-binding domain.

It belongs to the universal ribosomal protein uS4 family. As to quaternary structure, part of the 30S ribosomal subunit. Contacts protein S5. The interaction surface between S4 and S5 is involved in control of translational fidelity.

It localises to the plastid. The protein localises to the chloroplast. One of the primary rRNA binding proteins, it binds directly to 16S rRNA where it nucleates assembly of the body of the 30S subunit. Functionally, with S5 and S12 plays an important role in translational accuracy. The sequence is that of Small ribosomal subunit protein uS4c (rps4) from Cucumis sativus (Cucumber).